A 356-amino-acid polypeptide reads, in one-letter code: MELLLQKGANALGQASDSSSILLEAASGGNPDSVTLLLEYGADANVPKNSGHLPIHVAADRGHLLALKTLVPVTDFAAIKRSGISPIHCAAAGAHPKCLELLIQAGFDVNFMLDQRIRKHYDDHRKSALYFAVSNGDLSSVKLLLSAGAMPNQDPVNCLQIALRMGNYELVSLLLRHGANVNYFCRVNPLHFPSALQYTLKDEVMLRMLLNYGYDTELCFDCPHGDKVHRFSASEGWTSTVIKDTMFCEVITLSWLQHLSGKVVRVMLDYVDQVRICSKLKAVLQKQGLWSEIHFILTNPRSLKHLCRLKIRKCMGRLRLRCPVFMSFLPLPSRLKAYVLYKEYDLYEQGIFTGTW.

6 ANK repeats span residues 17 to 46 (DSSS…DANV), 50 to 81 (SGHL…AIKR), 82 to 111 (SGIS…DVNF), 124 to 153 (HRKS…MPNQ), 154 to 183 (DPVN…NVNY), and 185 to 218 (CRVN…DTEL). The region spanning 290–345 (WSEIHFILTNPRSLKHLCRLKIRKCMGRLRLRCPVFMSFLPLPSRLKAYVLYKEYD) is the SOCS box domain.

This sequence belongs to the dynein heavy chain family. As to quaternary structure, consists of at least two heavy chains and a number of intermediate and light chains.

The protein localises to the cytoplasm. The protein resides in the cytoskeleton. It localises to the cilium axoneme. The protein operates within protein modification; protein ubiquitination. In terms of biological role, force generating protein of respiratory cilia. Produces force towards the minus ends of microtubules. Dynein has ATPase activity; the force-producing power stroke is thought to occur on release of ADP. Involved in sperm motility; implicated in sperm flagellar assembly. Its function is as follows. May be a substrate-recognition component of a SCF-like ECS (Elongin-Cullin-SOCS-box protein) E3 ubiquitin-protein ligase complex which mediates the ubiquitination and subsequent proteasomal degradation of target proteins. This is Dynein axonemal heavy chain 12 (DNAH12) from Bos taurus (Bovine).